Here is a 569-residue protein sequence, read N- to C-terminus: Spermatogenesis-associated protein 16 (569 aa).

Belongs to the SPATA16 family.

It is found in the golgi apparatus. Its subcellular location is the cytoplasmic vesicle. The protein localises to the secretory vesicle. The protein resides in the acrosome. Functionally, essential for spermiogenesis and male fertility. Involved in the formation of sperm acrosome during spermatogenesis. This is Spermatogenesis-associated protein 16 (SPATA16) from Macaca fascicularis (Crab-eating macaque).